We begin with the raw amino-acid sequence, 158 residues long: Phospholipase A2 AP-PLA2-II (158 aa).

Residues 1–16 (MKTFLILAMAVALAKA) form the signal peptide. The propeptide occupies 17-23 (QSTDEIT). 6 cysteine pairs are disulfide-bonded: cysteine 51–cysteine 158, cysteine 53–cysteine 69, cysteine 68–cysteine 138, cysteine 75–cysteine 131, cysteine 85–cysteine 124, and cysteine 109–cysteine 129. Ca(2+)-binding residues include glycine 54 and glycine 56. Histidine 72 is a catalytic residue. Aspartate 73 contacts Ca(2+). Aspartate 132 is an active-site residue.

Belongs to the phospholipase A2 family. Group I subfamily. As to quaternary structure, monomer. Ca(2+) serves as cofactor. In terms of tissue distribution, expressed by the venom gland.

It localises to the secreted. The enzyme catalyses a 1,2-diacyl-sn-glycero-3-phosphocholine + H2O = a 1-acyl-sn-glycero-3-phosphocholine + a fatty acid + H(+). Starfish phospholipase A2 (PLA2) that has hemorrhagic and capillary permeability-increasing activities and hence is considered to be deeply involved in the local inflammation. Shows hemolytic activity only in the presence of phosphatidylcholine (PC). PLA2 catalyzes the calcium-dependent hydrolysis of the 2-acyl groups in 3-sn-phosphoglycerides. This chain is Phospholipase A2 AP-PLA2-II, found in Acanthaster planci (Crown-of-thorns starfish).